A 256-amino-acid polypeptide reads, in one-letter code: Polycomb group RING finger protein 5 (256 aa).

An RING-type zinc finger spans residues Cys-18 to Gly-57. 2 stretches are compositionally biased toward basic and acidic residues: residues Glu-94–Pro-103 and Asp-110–Asp-120. The tract at residues Glu-94–His-133 is disordered.

As to quaternary structure, component of a PRC1-like complex that contains PCGF5, RNF2 and UBE2D3. Interacts with RNF2; the interaction is direct. Interacts with CBX6, CBX7 and CBX8. Interacts with AUTS2; the interaction is direct. Identified in a complex that contains AUTS2, PCGF5, CSNK2B and RNF2.

It localises to the nucleus. It is found in the nucleoplasm. Functionally, component of a Polycomb group (PcG) multiprotein PRC1-like complex, a complex class required to maintain the transcriptionally repressive state of many genes, including Hox genes, throughout development. PcG PRC1 complex acts via chromatin remodeling and modification of histones; it mediates monoubiquitination of histone H2A 'Lys-119', rendering chromatin heritably changed in its expressibility. Within the PRC1-like complex, regulates RNF2 ubiquitin ligase activity. Plays a redundant role with PCGF3 as part of a PRC1-like complex that mediates monoubiquitination of histone H2A 'Lys-119' on the X chromosome and is required for normal silencing of one copy of the X chromosome in XX females. In Homo sapiens (Human), this protein is Polycomb group RING finger protein 5 (PCGF5).